Consider the following 798-residue polypeptide: Probable serine/threonine-protein kinase DDB_G0276461 (798 aa).

One can recognise a Protein kinase domain in the interval 54 to 324; the sequence is VTEVKLVAEG…DLLNYLNEIR (271 aa). ATP is bound by residues 60 to 68 and Lys-82; that span reads VAEGGFGFV. The active-site Proton acceptor is Asp-185. 3 disordered regions span residues 330 to 538, 553 to 645, and 659 to 798; these read GLQT…NGNF, TNGS…SYNN, and SSAS…FGIL. 6 stretches are compositionally biased toward low complexity: residues 335–406, 429–490, 506–538, 557–603, 611–642, and 659–678; these read SSNN…NTPN, SNSN…NNNN, PSPSNSNSNVIINNTNSSGKNNQNKSNSGNGNF, TNFE…INNS, SSGSLPQSRQSSFNSTPQQQQQQFNSSTNSGS, and SSASISSSGGVSNNSDNSWN. Positions 679–697 are enriched in polar residues; sequence VTLTPSQSNKNSTGNLKPL. Residues 698–716 show a composition bias toward low complexity; the sequence is NNNNNNNNNNNNRFANNTN. Over residues 717–769 the composition is skewed to polar residues; it reads SSRDYSFDFSSPNTSNNNDFGSFVQPSSSSSLNTTHFSKPNYNVNLNQTTSMT. Positions 770-790 are enriched in low complexity; that stretch reads NNYNNNNYNNNNNSNNNNNNS.

It belongs to the protein kinase superfamily. Ser/Thr protein kinase family.

The catalysed reaction is L-seryl-[protein] + ATP = O-phospho-L-seryl-[protein] + ADP + H(+). It catalyses the reaction L-threonyl-[protein] + ATP = O-phospho-L-threonyl-[protein] + ADP + H(+). The sequence is that of Probable serine/threonine-protein kinase DDB_G0276461 from Dictyostelium discoideum (Social amoeba).